A 512-amino-acid polypeptide reads, in one-letter code: Protein disulfide-isomerase (512 aa).

Residues 1 to 24 (MAKNVAIFGLLFSLLLLVPSQIFA) form the signal peptide. One can recognise a Thioredoxin 1 domain in the interval 25–144 (EESSTDAKEF…IVEYLKKQSG (120 aa)). Active-site nucleophile residues include Cys-62 and Cys-65. An intrachain disulfide couples Cys-62 to Cys-65. Asn-278 carries an N-linked (GlcNAc...) asparagine glycan. Residues 357–485 (YKDGKVEPFV…IIEFIEKNKD (129 aa)) form the Thioredoxin 2 domain. Catalysis depends on nucleophile residues Cys-407 and Cys-410. A disulfide bond links Cys-407 and Cys-410. The segment covering 487–496 (TGAAHQEVEQ) has biased composition (basic and acidic residues). The disordered stretch occupies residues 487–512 (TGAAHQEVEQPKAAAQPEAEQPKDEL). Positions 509-512 (KDEL) match the Prevents secretion from ER motif.

The protein belongs to the protein disulfide isomerase family.

It localises to the endoplasmic reticulum lumen. The enzyme catalyses Catalyzes the rearrangement of -S-S- bonds in proteins.. In terms of biological role, participates in the folding of proteins containing disulfide bonds, may be involved in glycosylation, prolyl hydroxylation and triglyceride transfer. The protein is Protein disulfide-isomerase (PDI) of Medicago sativa (Alfalfa).